The chain runs to 533 residues: MKITNPVLKGFNPDPSICRAGEDYYIAVSTFEWFPGVQIHHSKDLVNWHLVAHPLQRVSQLDMKGNPNSGGVWAPCLSYSDGKFWLIYTDVKVVDGAWKDCHNYLVTCETINGDWSEPIKLNSSGFDASLFHDTDGKKYLLNMLWDHRIDRHSFGGIVIQEYSDKEQKLIGKPKVIFEGTDRKLTEAPHLYHIGNYYYLLTAEGGTRYEHAATIARSANIEGPYEVHPDNPILTSWHDPGNPLQKCGHASIVQTHTDEWYLAHLTGRPIHPDDDSIFQQRGYCPLGRETAIQKLYWKDEWPYVVGGKEGSLEVDAPSIPETIFEATYPEVDEFEDSTLNINFQTLRIPFTNELGSLTQAPNHLRLFGHESLTSTFTQAFVARRWQSLHFEAETAVEFYPENFQQAAGLVNYYNTENWTALQVTHDEELGRILELTICDNFSFSQPLNNKIVIPREVKYVYLRVNIEKDKYYYFYSFNKEDWHKIDIALESKKLSDDYIRGGGFFTGAFVGMQCQDTSGNHIPADFRYFRYKEK.

The active-site Proton acceptor is Asp-14. Glu-186 serves as the catalytic Proton donor.

It belongs to the glycosyl hydrolase 43 family. In terms of assembly, homodimer.

It localises to the cell membrane. It carries out the reaction Hydrolysis of (1-&gt;4)-beta-D-xylans, to remove successive D-xylose residues from the non-reducing termini.. The chain is Beta-xylosidase (xynB) from Bacillus subtilis (strain 168).